A 361-amino-acid chain; its full sequence is Aromatic amino acid aminotransferase (361 aa).

K215 carries the N6-(pyridoxal phosphate)lysine modification.

Belongs to the class-II pyridoxal-phosphate-dependent aminotransferase family. In terms of assembly, homodimer. Requires pyridoxal 5'-phosphate as cofactor.

The enzyme catalyses an aromatic L-alpha-amino acid + 2-oxoglutarate = an aromatic oxo-acid + L-glutamate. Its function is as follows. Aminotransferase that catalyzes the conversion of aromatic amino acids and 2-oxoglutarate into corresponding aromatic oxo acids and L-glutamate. The polypeptide is Aromatic amino acid aminotransferase (Mycolicibacterium smegmatis (strain ATCC 700084 / mc(2)155) (Mycobacterium smegmatis)).